A 1349-amino-acid chain; its full sequence is ABC multidrug transporter G (1349 aa).

The 249-residue stretch at 51-299 (RQFLGFLKGS…FEDMGFVCPK (249 aa)) folds into the ABC transporter 1 domain. The N-linked (GlcNAc...) asparagine glycan is linked to asparagine 144. Helical transmembrane passes span 407 to 427 (LSLIIKVVSAILQALVCGSLF), 436 to 456 (SIFLRPGALFFPVLYFLLESM), 492 to 512 (IPVVLVQVSCFCIILYFMAAL), and 523 to 543 (WIIVIANTLCFMQMFRAVGAL). Asparagine 549 carries N-linked (GlcNAc...) asparagine glycosylation. A run of 2 helical transmembrane segments spans residues 550-570 (ASKITGLLSTIFFVYGGYLIP) and 580-600 (WIFYLNPGAYAFEALMANEFV). An N-linked (GlcNAc...) asparagine glycan is attached at asparagine 649. Residues 659–679 (FGVIIGFWVFFIVLTALGLEL) traverse the membrane as a helical segment. The ABC transporter 2 domain maps to 721–963 (FTWHDLDYHV…VLDYFARHGA (243 aa)). ATP is bound at residue 757–764 (GCSGAGKT). N-linked (GlcNAc...) asparagine glycosylation occurs at asparagine 994. A run of 6 helical transmembrane segments spans residues 1056–1076 (VILHVFAALFSGFTFWKIGDG), 1085–1105 (FAIFNFIFVAPGCINQMQPFF), 1121–1143 (IYHWLAFIGAQTVSEIPYLILCA), 1166–1186 (MYLQMIFYEFLYTSIGQGIAA), 1193–1213 (FAAVMNPVLIGAGLVSFCGVV), and 1226–1246 (WLYYLDPFTYLVGGLLGEVLW). Asparagine 1287 carries N-linked (GlcNAc...) asparagine glycosylation. The helical transmembrane segment at 1318 to 1338 (TGITALFCVSSYAMVFLMMKL) threads the bilayer.

This sequence belongs to the ABC transporter superfamily. ABCG family. PDR (TC 3.A.1.205) subfamily.

Its subcellular location is the cell membrane. In terms of biological role, ABC efflux transporter that seems not to be able to transport azoles, nor rhodamine 6G (R-6G), a known substrate for many ABC transporters. The protein is ABC multidrug transporter G of Aspergillus fumigatus (strain ATCC MYA-4609 / CBS 101355 / FGSC A1100 / Af293) (Neosartorya fumigata).